The chain runs to 143 residues: MSRSGVAVADESLTAFNDLKLGKKYKFVLFGLNADKTSIIVKETSNERDYDVFLEKLPEDDCLYAVYDFEYEISGAEGKRSKIVFFTWSPDTAPIRSKMVYASSKDALRRALNGVSSDIQGTDFSEVAYESVLEKVSRGAGSH.

In terms of domain architecture, ADF-H spans 5-137 (GVAVADESLT…AYESVLEKVS (133 aa)).

It belongs to the actin-binding proteins ADF family.

It localises to the cytoplasm. The protein resides in the cytoskeleton. The protein localises to the nucleus matrix. In terms of biological role, controls reversibly actin polymerization and depolymerization in a pH-sensitive manner. It has the ability to bind G- and F-actin in a 1:1 ratio of cofilin to actin. Binding to F-actin is regulated by tropomyosin. It is the major component of intranuclear and cytoplasmic actin rods. Required for accumulation of actin at the cell division site via depolymerizing actin at the cell ends. In association with myosin II has a role in the assembly of the contractile ring via severing actin filaments. Involved in the maintenance of the contractile ring once formed. In association with profilin and capping protein, has a role in the mitotic reorganization of the actin cytoskeleton. This Eremothecium gossypii (strain ATCC 10895 / CBS 109.51 / FGSC 9923 / NRRL Y-1056) (Yeast) protein is Cofilin (COF1).